The following is a 212-amino-acid chain: Large ribosomal subunit protein uL3 (212 aa).

Residues M135–G161 form a disordered region. Q153 is modified (N5-methylglutamine).

It belongs to the universal ribosomal protein uL3 family. In terms of assembly, part of the 50S ribosomal subunit. Forms a cluster with proteins L14 and L19. Methylated by PrmB.

Functionally, one of the primary rRNA binding proteins, it binds directly near the 3'-end of the 23S rRNA, where it nucleates assembly of the 50S subunit. This is Large ribosomal subunit protein uL3 from Alteromonas mediterranea (strain DSM 17117 / CIP 110805 / LMG 28347 / Deep ecotype).